A 956-amino-acid chain; its full sequence is Kinesin heavy chain isoform 5C (956 aa).

The 320-residue stretch at 8–327 (SIKVMCRFRP…LMFGQRAKTI (320 aa)) folds into the Kinesin motor domain. Residues Q87, S89, S90, G91, K92, T93, H94, and K99 each coordinate ATP. A microtubule-binding region spans residues 174–315 (VSSPEEVMDV…PSVFNEAETK (142 aa)). The residue at position 403 (T403) is a Phosphothreonine. Residues 406–923 (VDGISAEKEK…RRAHSAQIAK (518 aa)) adopt a coiled-coil conformation. A globular region spans residues 859-956 (CELPKLEKRL…GSSNSTHYQK (98 aa)). Positions 910 to 956 (KNMARRAHSAQIAKPIRPGHYPASSPTAVHAVRGGGGGSSNSTHYQK) are disordered.

This sequence belongs to the TRAFAC class myosin-kinesin ATPase superfamily. Kinesin family. Kinesin subfamily. Oligomer composed of two heavy chains and two light chains. Interacts with GRIP1. Interacts with KLC3 and TRAK1. Interacts with ZFYVE27.

It is found in the cytoplasm. The protein localises to the cytoskeleton. The protein resides in the cell projection. Its subcellular location is the dendrite. The enzyme catalyses ATP + H2O = ADP + phosphate + H(+). Its function is as follows. Microtubule-associated force-producing protein that may play a role in organelle transport. Has ATPase activity. Involved in synaptic transmission. Mediates dendritic trafficking of mRNAs. Required for anterograde axonal transportation of MAPK8IP3/JIP3 which is essential for MAPK8IP3/JIP3 function in axon elongation. This is Kinesin heavy chain isoform 5C (Kif5c) from Mus musculus (Mouse).